The primary structure comprises 350 residues: Chlorophyll a/b light-harvesting protein PcbA (350 aa).

The next 6 membrane-spanning stretches (helical) occupy residues 26–46 (LSAH…ITLF), 62–82 (LILI…GQVV), 87–107 (YFVI…GALY), 214–234 (IAVV…FPWA), 248–268 (LSAS…FSAV), and 309–329 (LCNV…WHAL).

Belongs to the PsbB/PsbC family. IsiA/Pcb subfamily. As to quaternary structure, the antenna complex consists of chlorophylls (a and b) and chlorophyll a/b binding proteins. Chlorophyll a is required as a cofactor. The cofactor is chlorophyll b.

The protein localises to the cellular thylakoid membrane. In terms of biological role, the antenna complex functions as a light receptor, it captures and delivers excitation energy to photosystems II and I. The Prochlorales pcb genes are not related to higher plant LHCs. This is Chlorophyll a/b light-harvesting protein PcbA (pcbA) from Prochlorothrix hollandica.